The sequence spans 444 residues: Proline--tRNA ligase (444 aa).

It belongs to the class-II aminoacyl-tRNA synthetase family. ProS type 2 subfamily. Homodimer.

The protein resides in the cytoplasm. It catalyses the reaction tRNA(Pro) + L-proline + ATP = L-prolyl-tRNA(Pro) + AMP + diphosphate. Catalyzes the attachment of proline to tRNA(Pro) in a two-step reaction: proline is first activated by ATP to form Pro-AMP and then transferred to the acceptor end of tRNA(Pro). In Bradyrhizobium sp. (strain BTAi1 / ATCC BAA-1182), this protein is Proline--tRNA ligase.